Here is a 494-residue protein sequence, read N- to C-terminus: Cheilanthifoline synthase (494 aa).

The helical transmembrane segment at 4–24 threads the bilayer; the sequence is TIWLIISTVIIVLGIAKFLLG. C437 provides a ligand contact to heme.

Belongs to the cytochrome P450 family. Heme serves as cofactor. Expressed in roots and at lower levels in stems, leaves and plantlets.

The protein resides in the endoplasmic reticulum membrane. It catalyses the reaction (S)-scoulerine + reduced [NADPH--hemoprotein reductase] + O2 = (S)-cheilanthifoline + oxidized [NADPH--hemoprotein reductase] + 2 H2O + H(+). Methylenedioxy bridge-forming cytochrome P450 involved in the biosynthesis of isoquinoline alkaloids. Converts (S)-scoulerine into (S)-cheilanthifoline, a precursor of sanguinarine. Catalyzes an oxidative reaction that does not incorporate oxygen into the product. The sequence is that of Cheilanthifoline synthase from Argemone mexicana (Mexican prickly poppy).